Reading from the N-terminus, the 288-residue chain is Glandicoline B O-methyltransferase roqN (288 aa).

S-adenosyl-L-methionine is bound by residues threonine 57, aspartate 82, and 109 to 110; that span reads DA.

This sequence belongs to the class I-like SAM-binding methyltransferase superfamily.

It carries out the reaction glandicoline B + S-adenosyl-L-methionine = meleagrin + S-adenosyl-L-homocysteine + H(+). The protein operates within alkaloid biosynthesis. Its function is as follows. Glandicoline B O-methyltransferase; part of the gene cluster that mediates the biosynthesis of the mycotoxin meleagrin. The first stage is catalyzed by the dipeptide synthase roqA which condenses histidine and tryptophan to produce histidyltryptophanyldiketopiperazine (HTD). HTD is then converted to roquefortine C through two possible pathways. In the first pathway, prenyltransferase roqD transforms HTD to the intermediate roquefortine D, which is in turn converted to roquefortine C by the cytochrome P450 monooxygenase roqR. In the second pathway, HTD is first converted to the intermediate dehydrohistidyltryptophanyldi-ketopiperazine (DHTD) by roqR which is then prenylated by roqD to form roquefortine C. Roquefortine C can be further transformed to meleagrin via three more reactions including oxydation to glandicolin A by roqM, which is further reduced to glandicoline B by roqO. Finally, glandicoline B is converted to meleagrin by the glandicoline B O-methyltransferase roqN. More studies identified further branching and additional metabolites produced by the roquefortine/meleagrin cluster, including roquefortine F, roquefortine L, roquefortine M, roquefortine N and neoxaline. The protein is Glandicoline B O-methyltransferase roqN of Penicillium rubens (strain ATCC 28089 / DSM 1075 / NRRL 1951 / Wisconsin 54-1255) (Penicillium chrysogenum).